The chain runs to 129 residues: Succinate dehydrogenase subunit 3-2, mitochondrial (129 aa).

Residues 1-58 (MEKYQSKARFAPLSDAPFALRGALGSSNSSFNNIDHLRQSSSSGQARSYTSSPLGALR) constitute a mitochondrion transit peptide. Residues 27–53 (SNSSFNNIDHLRQSSSSGQARSYTSSP) show a composition bias toward polar residues. The interval 27-66 (SNSSFNNIDHLRQSSSSGQARSYTSSPLGALRPKMFPSGN) is disordered. Position 87 (His87) interacts with heme. The chain crosses the membrane as a helical span at residues 105–127 (IFGAALGAVIISIPLATKFSLMF).

In terms of assembly, component of complex II composed of eight subunits in plants: four classical SDH subunits SDH1, SDH2, SDH3 and SDH4 (a flavoprotein (FP), an iron-sulfur protein (IP), and a cytochrome b composed of a large and a small subunit.), as well as four subunits unknown in mitochondria from bacteria and heterotrophic eukaryotes. Heme is required as a cofactor.

It localises to the mitochondrion inner membrane. It functions in the pathway carbohydrate metabolism; tricarboxylic acid cycle. Functionally, membrane-anchoring subunit of succinate dehydrogenase (SDH). In Oryza sativa subsp. japonica (Rice), this protein is Succinate dehydrogenase subunit 3-2, mitochondrial.